Here is a 293-residue protein sequence, read N- to C-terminus: Ribonuclease HII (293 aa).

Residues threonine 81–glycine 271 form the RNase H type-2 domain. 3 residues coordinate a divalent metal cation: aspartate 87, glutamate 88, and aspartate 180. The tract at residues proline 273–serine 293 is disordered.

This sequence belongs to the RNase HII family. Requires Mn(2+) as cofactor. Mg(2+) is required as a cofactor.

It localises to the cytoplasm. The catalysed reaction is Endonucleolytic cleavage to 5'-phosphomonoester.. Functionally, endonuclease that specifically degrades the RNA of RNA-DNA hybrids. This chain is Ribonuclease HII, found in Myxococcus xanthus (strain DK1622).